We begin with the raw amino-acid sequence, 816 residues long: Neuroligin-4, Y-linked (816 aa).

A signal peptide spans 1-43 (MLRPQGLLWLPLLFTSVCVMLNSNVLLWITALAIKFTLIDSQA). Topologically, residues 44 to 676 (QYPVVNTNYG…TKRDYSTELS (633 aa)) are extracellular. N102 is a glycosylation site (N-linked (GlcNAc...) asparagine). Cystine bridges form between C110–C146 and C306–C317. Residues 359-364 (QGEFLN) are interaction with NRXN1. The cysteines at positions 476 and 510 are disulfide-linked. N511 carries N-linked (GlcNAc...) asparagine glycosylation. The tract at residues 636–659 (TKRPAITPANNPKHSKDPHKTGPE) is disordered. Residues 649–658 (HSKDPHKTGP) are compositionally biased toward basic and acidic residues. Residues 677–697 (VTIAVGASLLFLNILAFAALY) form a helical membrane-spanning segment. Over 698-816 (YKKDKRRHET…LPHGHSTTRV (119 aa)) the chain is Cytoplasmic. S712 is subject to Phosphoserine.

Belongs to the type-B carboxylesterase/lipase family. In terms of assembly, homodimer. Interacts with NRXN1 in a calcium-dependent manner. Interaction with neurexins is mediated by heparan sulfate glycan modification on neurexin. Interacts through its C-terminus with DLG4/PSD-95 third PDZ domain. Expressed in fetal and adult brain, prostate and testis.

The protein resides in the cell membrane. The protein localises to the postsynaptic density membrane. In terms of biological role, cell surface protein involved in cell-cell-interactions via its interactions with neurexin family members. This Homo sapiens (Human) protein is Neuroligin-4, Y-linked (NLGN4Y).